Reading from the N-terminus, the 1184-residue chain is DNA-directed RNA polymerase subunit beta (1184 aa).

Residues 1160–1184 (DDDFTNQNDAFNIVQPENAAAEKTE) are disordered.

The protein belongs to the RNA polymerase beta chain family. As to quaternary structure, the RNAP catalytic core consists of 2 alpha, 1 beta, 1 beta' and 1 omega subunit. When a sigma factor is associated with the core the holoenzyme is formed, which can initiate transcription.

It carries out the reaction RNA(n) + a ribonucleoside 5'-triphosphate = RNA(n+1) + diphosphate. Functionally, DNA-dependent RNA polymerase catalyzes the transcription of DNA into RNA using the four ribonucleoside triphosphates as substrates. The sequence is that of DNA-directed RNA polymerase subunit beta from Listeria monocytogenes serotype 4b (strain F2365).